Reading from the N-terminus, the 213-residue chain is Dephospho-CoA kinase (213 aa).

The DPCK domain maps to Arg-3 to His-202. Gly-11–Arg-16 serves as a coordination point for ATP.

The protein belongs to the CoaE family.

Its subcellular location is the cytoplasm. The catalysed reaction is 3'-dephospho-CoA + ATP = ADP + CoA + H(+). Its pathway is cofactor biosynthesis; coenzyme A biosynthesis; CoA from (R)-pantothenate: step 5/5. In terms of biological role, catalyzes the phosphorylation of the 3'-hydroxyl group of dephosphocoenzyme A to form coenzyme A. This chain is Dephospho-CoA kinase, found in Bordetella avium (strain 197N).